The chain runs to 355 residues: Magnesium-chelatase subunit ChlI (355 aa).

47-54 (GDRGTGKS) is a binding site for ATP.

It belongs to the Mg-chelatase subunits D/I family.

It is found in the plastid. Its subcellular location is the chloroplast. The catalysed reaction is protoporphyrin IX + Mg(2+) + ATP + H2O = Mg-protoporphyrin IX + ADP + phosphate + 3 H(+). Its pathway is porphyrin-containing compound metabolism; chlorophyll biosynthesis. Involved in chlorophyll biosynthesis; introduces a magnesium ion into protoporphyrin IX to yield Mg-protoporphyrin IX. The protein is Magnesium-chelatase subunit ChlI (chlI) of Pyropia yezoensis (Susabi-nori).